The following is a 576-amino-acid chain: Rho GTPase-activating protein gacP (576 aa).

Residues 123-189 are a coiled coil; that stretch reads LKSIIKTELK…RTNFERVGID (67 aa). The Rho-GAP domain maps to 277–462; the sequence is EDLSVLLNRE…TIIQNFDRIF (186 aa). A disordered region spans residues 472–576; the sequence is VPDTYVPPPN…DEGDAVELSD (105 aa). The span at 482–500 shows a compositional bias: low complexity; it reads NTRNNSVNNFNNVQPSSFS. Over residues 501–513 the composition is skewed to polar residues; sequence ASTSRSINLNKST. A compositionally biased stretch (low complexity) spans 514 to 530; sequence NNPNINDDNNNNNNINN. Positions 565–576 are enriched in acidic residues; it reads SFDEGDAVELSD.

It localises to the cytoplasm. Rho GTPase-activating protein involved in the signal transduction pathway. In Dictyostelium discoideum (Social amoeba), this protein is Rho GTPase-activating protein gacP (gacP).